The primary structure comprises 825 residues: Outer dense fiber protein 2 (825 aa).

Phosphoserine is present on residues V22, K37, S68, and S69. A disordered region spans residues 27-46 (LPKPSAASSQKSHKRGMKGD). Position 87 is a phosphothreonine (T87). S90 carries the post-translational modification Phosphoserine; by TSSK4. A phosphoserine mark is found at S101 and S104. T105 bears the Phosphothreonine mark. Phosphoserine is present on residues S110 and S124. K133 is covalently cross-linked (Glycyl lysine isopeptide (Lys-Gly) (interchain with G-Cter in SUMO2)). S134 carries the post-translational modification Phosphoserine. Positions 139 to 212 (QKGERQMAKR…MSKLVEAEMD (74 aa)) form a coiled coil. Position 226 is a phosphothreonine (T226). Coiled coils occupy residues 240–418 (DINT…AEQL) and 456–793 (EIIV…NYVQ). S256 and S627 each carry phosphoserine. The interval 532-696 (KNYEGMIDNY…EAIHQAQLRL (165 aa)) is interaction with BBOF1.

It belongs to the ODF2 family. Self-associates. Associates with microtubules and forms a fibrillar structure partially linked to the microtubule network. Interacts through its C-terminus with PLK1. Interacts with ODF1. Interacts with MARK4; the interaction is required for localization of ODF2 to centrioles. Interacts with TSSK4. Interacts with AKNA. Interacts with QRICH2. Interacts with CFAP58. Interacts with BBOF1. Interacts with CCDC38. Interacts with CCDC42. Post-translationally, tyrosine phosphorylated. Phosphorylated on Ser-90 by TSSK4. In terms of tissue distribution, testis-specific. Expressed in the proximal compartment of the elongated spermatid tail; later expression progresses to the distal spermatid tail compartment located in the lumen of the seminiferous epithelium. In spermatids (stages II-III) expression of the tails peaks and remains strong during the remaining steps of spermiogenesis (at protein level). Expression correlates with the onset of spermatogenesis and is first detected at 30 days. Higher expression is seen in testis of 40-day-old and adults that are older than 50 days. No expression is seen in 10- and 20-day-old testes.

Its subcellular location is the cytoplasm. It localises to the cytoskeleton. The protein resides in the microtubule organizing center. It is found in the centrosome. The protein localises to the cell projection. Its subcellular location is the cilium. It localises to the centriole. The protein resides in the spindle pole. It is found in the flagellum. Seems to be a major component of sperm tail outer dense fibers (ODF). ODFs are filamentous structures located on the outside of the axoneme in the midpiece and principal piece of the mammalian sperm tail and may help to maintain the passive elastic structures and elastic recoil of the sperm tail. May have a modulating influence on sperm motility. Functions as a general scaffold protein that is specifically localized at the distal/subdistal appendages of mother centrioles. Component of the centrosome matrix required for the localization of PLK1 and NIN to the centrosomes. Required for the formation and/or maintenance of normal CETN1 assembly. This is Outer dense fiber protein 2 (Odf2) from Rattus norvegicus (Rat).